The chain runs to 607 residues: Elongation factor 4 (607 aa).

A tr-type G domain is found at 11 to 193; the sequence is EKIRNFSIIA…QIVEKVPAPT (183 aa). Residues 23-28 and 140-143 contribute to the GTP site; these read DHGKST and NKID.

Belongs to the TRAFAC class translation factor GTPase superfamily. Classic translation factor GTPase family. LepA subfamily.

Its subcellular location is the cell membrane. The enzyme catalyses GTP + H2O = GDP + phosphate + H(+). Required for accurate and efficient protein synthesis under certain stress conditions. May act as a fidelity factor of the translation reaction, by catalyzing a one-codon backward translocation of tRNAs on improperly translocated ribosomes. Back-translocation proceeds from a post-translocation (POST) complex to a pre-translocation (PRE) complex, thus giving elongation factor G a second chance to translocate the tRNAs correctly. Binds to ribosomes in a GTP-dependent manner. This is Elongation factor 4 from Streptococcus gordonii (strain Challis / ATCC 35105 / BCRC 15272 / CH1 / DL1 / V288).